The primary structure comprises 255 residues: MRILLTNDDGIHAEGLAVLERIARKLSDDVWVVAPETDQSGLAHSLTLLEPLRLRQIDARHFALRGTPTDCVIMGVRHVLPGAPDLVLSGVNSGANMADDVTYSGTVAGAMEGTLLGVRAIALSQEYEYAGDRRIVPWETAEAHAPELIGRLMEAGWPEGVLLNLNFPNCAPEEVKGVRVTAQGKLSHDARLDERRDGRGFPYFWLHFGRGKAPVADDSDIAAIRSGCISMTPLHLDLTAHKVRAELGAALGVEA.

D8, D9, S40, and N92 together coordinate a divalent metal cation.

It belongs to the SurE nucleotidase family. A divalent metal cation is required as a cofactor.

The protein localises to the cytoplasm. The enzyme catalyses a ribonucleoside 5'-phosphate + H2O = a ribonucleoside + phosphate. In terms of biological role, nucleotidase that shows phosphatase activity on nucleoside 5'-monophosphates. This chain is 5'-nucleotidase SurE, found in Brucella abortus (strain S19).